Here is a 257-residue protein sequence, read N- to C-terminus: Zinc transporter ZupT (257 aa).

8 helical membrane passes run 5–25, 32–52, 61–81, 109–129, 137–157, 171–191, 195–215, and 236–256; these read LILT…GVLG, LLAF…LMEM, GMSP…YLGL, AILL…ATFV, LGFG…LAVV, ILWA…AWLI, MISP…MVAL, and GVLC…TAGI. Fe(2+)-binding residues include Asn-120 and Glu-123. The Zn(2+) site is built by Glu-123 and His-148. Fe(2+) is bound by residues Asn-149, Glu-152, and Glu-181. Glu-152 contacts Zn(2+).

The protein belongs to the ZIP transporter (TC 2.A.5) family. ZupT subfamily.

Its subcellular location is the cell inner membrane. The enzyme catalyses Zn(2+)(in) = Zn(2+)(out). Its function is as follows. Mediates zinc uptake. May also transport other divalent cations. The sequence is that of Zinc transporter ZupT from Shigella dysenteriae serotype 1 (strain Sd197).